A 223-amino-acid chain; its full sequence is Phosphoribosylformylglycinamidine synthase subunit PurQ (223 aa).

The region spanning 4–223 (FAVIVFPGTN…FKSIVEWMKK (220 aa)) is the Glutamine amidotransferase type-1 domain. Cysteine 85 acts as the Nucleophile in catalysis. Residues histidine 196 and glutamate 198 contribute to the active site.

In terms of assembly, part of the FGAM synthase complex composed of 1 PurL, 1 PurQ and 2 PurS subunits.

The protein resides in the cytoplasm. It catalyses the reaction N(2)-formyl-N(1)-(5-phospho-beta-D-ribosyl)glycinamide + L-glutamine + ATP + H2O = 2-formamido-N(1)-(5-O-phospho-beta-D-ribosyl)acetamidine + L-glutamate + ADP + phosphate + H(+). The catalysed reaction is L-glutamine + H2O = L-glutamate + NH4(+). It participates in purine metabolism; IMP biosynthesis via de novo pathway; 5-amino-1-(5-phospho-D-ribosyl)imidazole from N(2)-formyl-N(1)-(5-phospho-D-ribosyl)glycinamide: step 1/2. Its function is as follows. Part of the phosphoribosylformylglycinamidine synthase complex involved in the purines biosynthetic pathway. Catalyzes the ATP-dependent conversion of formylglycinamide ribonucleotide (FGAR) and glutamine to yield formylglycinamidine ribonucleotide (FGAM) and glutamate. The FGAM synthase complex is composed of three subunits. PurQ produces an ammonia molecule by converting glutamine to glutamate. PurL transfers the ammonia molecule to FGAR to form FGAM in an ATP-dependent manner. PurS interacts with PurQ and PurL and is thought to assist in the transfer of the ammonia molecule from PurQ to PurL. This Pyrococcus horikoshii (strain ATCC 700860 / DSM 12428 / JCM 9974 / NBRC 100139 / OT-3) protein is Phosphoribosylformylglycinamidine synthase subunit PurQ.